The sequence spans 592 residues: Membrane protein insertase YidC (592 aa).

5 helical membrane-spanning segments follow: residues 8 to 28 (LFIA…FVMG), 363 to 385 (ALGQ…MFPL), 430 to 450 (INPL…FALY), 493 to 513 (IWLI…GLTM), and 531 to 551 (IFAF…AGLV).

This sequence belongs to the OXA1/ALB3/YidC family. Type 1 subfamily. In terms of assembly, interacts with the Sec translocase complex via SecD. Specifically interacts with transmembrane segments of nascent integral membrane proteins during membrane integration.

It is found in the cell inner membrane. Required for the insertion and/or proper folding and/or complex formation of integral membrane proteins into the membrane. Involved in integration of membrane proteins that insert both dependently and independently of the Sec translocase complex, as well as at least some lipoproteins. Aids folding of multispanning membrane proteins. This chain is Membrane protein insertase YidC, found in Maricaulis maris (strain MCS10) (Caulobacter maris).